The chain runs to 279 residues: Putative Delta(7)-sterol-C5(6)-desaturase 2 (279 aa).

2 helical membrane-spanning segments follow: residues 48 to 68 (LAGN…IYYL) and 127 to 147 (FLCF…IYWV). Residues 134 to 263 (ALYLVLVEFM…TIWMDWMFGS (130 aa)) form the Fatty acid hydroxylase domain. A Histidine box-1 motif is present at residues 148–152 (HKELH). The short motif at 162–166 (HATHH) is the Histidine box-2 element. The helical transmembrane segment at 194 to 214 (HVIALFIVPIHLITHLSLLFL) threads the bilayer. The short motif at 239–243 (HTIHH) is the Histidine box-3 element.

Belongs to the sterol desaturase family. The cofactor is Fe cation.

It is found in the endoplasmic reticulum membrane. It carries out the reaction a Delta(7)-sterol + 2 Fe(II)-[cytochrome b5] + O2 + 2 H(+) = a Delta(5),Delta(7)-sterol + 2 Fe(III)-[cytochrome b5] + 2 H2O. The sequence is that of Putative Delta(7)-sterol-C5(6)-desaturase 2 (HDF7) from Arabidopsis thaliana (Mouse-ear cress).